We begin with the raw amino-acid sequence, 300 residues long: MADQLIRATAAEDGIRAVGVITTRLTEEARQRHKLSYVATAALGRTMAAGLLLASSMKQPQARVNIRIKGDGPLEGLFVDAGCDGTVRGYVYNPAIELPPNAKGKLDVGGAVGSQGYLYVIRDLGYGYPYSSTVELVSGEIAEDITHYLVTSEQTPSALVLGVFVTEAGVTAAGGVLIQVLPKAAQDEALVEKLESRISALSGFTPLLQRGLSLSEIFEQLLGDMGLTILPQRQLVRFHCRCSFDRMLGALKILGSDELQDMIDRDNGAEATCHFCGEVYQASSEQLAELIDELKAEAGG.

2 disulfide bridges follow: C240–C242 and C273–C276.

The protein belongs to the HSP33 family. Post-translationally, under oxidizing conditions two disulfide bonds are formed involving the reactive cysteines. Under reducing conditions zinc is bound to the reactive cysteines and the protein is inactive.

It localises to the cytoplasm. In terms of biological role, redox regulated molecular chaperone. Protects both thermally unfolding and oxidatively damaged proteins from irreversible aggregation. Plays an important role in the bacterial defense system toward oxidative stress. This is 33 kDa chaperonin from Cyanothece sp. (strain PCC 7425 / ATCC 29141).